Reading from the N-terminus, the 56-residue chain is Photosystem II reaction center protein K (56 aa).

The propeptide occupies 1–19 (MFNIFLDDAFIHSNNPFFG). Residues 35-55 (MPIIPVLSFLLAFVWQAAVSF) traverse the membrane as a helical segment.

It belongs to the PsbK family. As to quaternary structure, PSII is composed of 1 copy each of membrane proteins PsbA, PsbB, PsbC, PsbD, PsbE, PsbF, PsbH, PsbI, PsbJ, PsbK, PsbL, PsbM, PsbT, PsbX, PsbY, PsbZ, Psb30/Ycf12, at least 3 peripheral proteins of the oxygen-evolving complex and a large number of cofactors. It forms dimeric complexes.

It localises to the plastid. The protein resides in the chloroplast thylakoid membrane. One of the components of the core complex of photosystem II (PSII). PSII is a light-driven water:plastoquinone oxidoreductase that uses light energy to abstract electrons from H(2)O, generating O(2) and a proton gradient subsequently used for ATP formation. It consists of a core antenna complex that captures photons, and an electron transfer chain that converts photonic excitation into a charge separation. The polypeptide is Photosystem II reaction center protein K (Pinus thunbergii (Japanese black pine)).